The sequence spans 441 residues: Peroxisomal biogenesis factor 3 (441 aa).

Over 1–17 (MAPNQRSRSLLQRHRGK) the chain is Peroxisomal. The chain crosses the membrane as a helical span at residues 18 to 39 (VLISLTGIAALFTTGSVVVFFV). The Cytoplasmic segment spans residues 40 to 441 (KRWLYKQQLR…GVSSSFSFKP (402 aa)).

The protein belongs to the peroxin-3 family. Interacts with MSP1; leading to inhibit the translocase activity of MSP1.

Its subcellular location is the peroxisome membrane. Involved in peroxisome biosynthesis. Acts as a regulator of MSP1 by inhibiting the ability of MSP1 to unfold target proteins. The polypeptide is Peroxisomal biogenesis factor 3 (PEX3) (Saccharomyces cerevisiae (strain ATCC 204508 / S288c) (Baker's yeast)).